A 1100-amino-acid chain; its full sequence is Tyrosine-protein kinase JAK3 (1100 aa).

The cytokine/interferon/growth hormone receptors stretch occupies residues 1–223 (MAPPSEETPL…RRTVVQALRR (223 aa)). At Ser17 the chain carries Phosphoserine. The FERM domain occupies 24–353 (GALHVLLPPR…GYFRLICDSR (330 aa)). In terms of domain architecture, SH2; atypical spans 372–472 (LCHGPITLDF…GTALNLTSCC (101 aa)). Residues 517–777 (LEWHENLGHG…AILRDLNGLI (261 aa)) enclose the Protein kinase 1 domain. Tyr781 is modified (phosphotyrosine; by autocatalysis). A Protein kinase 2 domain is found at 818–1091 (LKYISLLGKG…PAFDTLSPQL (274 aa)). Residues 824–832 (LGKGNFGSV) and Lys851 contribute to the ATP site. Residues Tyr900 and Tyr935 each carry the phosphotyrosine modification. The active-site Proton acceptor is the Asp945. Residues Tyr976 and Tyr977 each carry the phosphotyrosine; by autocatalysis modification.

The protein belongs to the protein kinase superfamily. Tyr protein kinase family. JAK subfamily. As to quaternary structure, interacts with STAM2 and MYO18A. Interacts with SHB. Interacts with CD69. Post-translationally, autophosphorylated, leading to regulate its activity. IL2 promotes phosphorylation on tyrosine residues, including autophosphorylation on Tyr-781. Dephosphorylation of Tyr-976 and Tyr-977 by PTPN2 negatively regulates cytokine-mediated signaling. As to expression, in contrast with the ubiquitous expression of the other JAKs, JAK3 is predominantly expressed in hematopoietic tissues.

It localises to the endomembrane system. It is found in the cytoplasm. It catalyses the reaction L-tyrosyl-[protein] + ATP = O-phospho-L-tyrosyl-[protein] + ADP + H(+). In terms of biological role, non-receptor tyrosine kinase involved in various processes such as cell growth, development, or differentiation. Mediates essential signaling events in both innate and adaptive immunity and plays a crucial role in hematopoiesis during T-cells development. In the cytoplasm, plays a pivotal role in signal transduction via its association with type I receptors sharing the common subunit gamma such as IL2R, IL4R, IL7R, IL9R, IL15R and IL21R. Following ligand binding to cell surface receptors, phosphorylates specific tyrosine residues on the cytoplasmic tails of the receptor, creating docking sites for STATs proteins. Subsequently, phosphorylates the STATs proteins once they are recruited to the receptor. Phosphorylated STATs then form homodimer or heterodimers and translocate to the nucleus to activate gene transcription. For example, upon IL2R activation by IL2, JAK1 and JAK3 molecules bind to IL2R beta (IL2RB) and gamma chain (IL2RG) subunits inducing the tyrosine phosphorylation of both receptor subunits on their cytoplasmic domain. Then, STAT5A and STAT5B are recruited, phosphorylated and activated by JAK1 and JAK3. Once activated, dimerized STAT5 translocates to the nucleus and promotes the transcription of specific target genes in a cytokine-specific fashion. The chain is Tyrosine-protein kinase JAK3 from Rattus norvegicus (Rat).